Reading from the N-terminus, the 153-residue chain is SsrA-binding protein (153 aa).

It belongs to the SmpB family.

It is found in the cytoplasm. Its function is as follows. Required for rescue of stalled ribosomes mediated by trans-translation. Binds to transfer-messenger RNA (tmRNA), required for stable association of tmRNA with ribosomes. tmRNA and SmpB together mimic tRNA shape, replacing the anticodon stem-loop with SmpB. tmRNA is encoded by the ssrA gene; the 2 termini fold to resemble tRNA(Ala) and it encodes a 'tag peptide', a short internal open reading frame. During trans-translation Ala-aminoacylated tmRNA acts like a tRNA, entering the A-site of stalled ribosomes, displacing the stalled mRNA. The ribosome then switches to translate the ORF on the tmRNA; the nascent peptide is terminated with the 'tag peptide' encoded by the tmRNA and targeted for degradation. The ribosome is freed to recommence translation, which seems to be the essential function of trans-translation. In Sulfurovum sp. (strain NBC37-1), this protein is SsrA-binding protein.